A 264-amino-acid chain; its full sequence is Glyceraldehyde-3-phosphate dehydrogenase (264 aa).

Positions 45 and 93 each coordinate NAD(+). D-glyceraldehyde 3-phosphate contacts are provided by residues 123–125 (SCT) and Thr154. The Nucleophile role is filled by Cys124. Asn155 contributes to the NAD(+) binding site. Residues Arg169, 182–183 (TG), and Arg205 each bind D-glyceraldehyde 3-phosphate. A disordered region spans residues 245–264 (GILGYTEDPXVSSDXKGNSH).

The protein belongs to the glyceraldehyde-3-phosphate dehydrogenase family. In terms of assembly, homotetramer.

The protein localises to the cytoplasm. The enzyme catalyses D-glyceraldehyde 3-phosphate + phosphate + NAD(+) = (2R)-3-phospho-glyceroyl phosphate + NADH + H(+). It participates in carbohydrate degradation; glycolysis; pyruvate from D-glyceraldehyde 3-phosphate: step 1/5. In terms of biological role, catalyzes the oxidative phosphorylation of glyceraldehyde 3-phosphate (G3P) to 1,3-bisphosphoglycerate (BPG) using the cofactor NAD. The first reaction step involves the formation of a hemiacetal intermediate between G3P and a cysteine residue, and this hemiacetal intermediate is then oxidized to a thioester, with concomitant reduction of NAD to NADH. The reduced NADH is then exchanged with the second NAD, and the thioester is attacked by a nucleophilic inorganic phosphate to produce BPG. The chain is Glyceraldehyde-3-phosphate dehydrogenase (gap) from Borrelia hermsii.